Consider the following 121-residue polypeptide: NAD(P)H-quinone oxidoreductase subunit 3, chloroplastic (121 aa).

3 helical membrane-spanning segments follow: residues 10–30, 65–85, and 90–110; these read FWAF…VSNL, MFAL…PWAM, and LGII…IGLI.

The protein belongs to the complex I subunit 3 family. In terms of assembly, NDH is composed of at least 16 different subunits, 5 of which are encoded in the nucleus.

It localises to the plastid. Its subcellular location is the chloroplast thylakoid membrane. The catalysed reaction is a plastoquinone + NADH + (n+1) H(+)(in) = a plastoquinol + NAD(+) + n H(+)(out). It carries out the reaction a plastoquinone + NADPH + (n+1) H(+)(in) = a plastoquinol + NADP(+) + n H(+)(out). In terms of biological role, NDH shuttles electrons from NAD(P)H:plastoquinone, via FMN and iron-sulfur (Fe-S) centers, to quinones in the photosynthetic chain and possibly in a chloroplast respiratory chain. The immediate electron acceptor for the enzyme in this species is believed to be plastoquinone. Couples the redox reaction to proton translocation, and thus conserves the redox energy in a proton gradient. This chain is NAD(P)H-quinone oxidoreductase subunit 3, chloroplastic, found in Staurastrum punctulatum (Green alga).